Consider the following 265-residue polypeptide: 4-hydroxy-tetrahydrodipicolinate reductase (265 aa).

Residues 9-14 (GALGRM), 100-102 (GTT), and 124-127 (SPNM) each bind NAD(+). The Proton donor/acceptor role is filled by H158. H159 contributes to the (S)-2,3,4,5-tetrahydrodipicolinate binding site. The active-site Proton donor is the K162. 168-169 (GT) contributes to the (S)-2,3,4,5-tetrahydrodipicolinate binding site.

This sequence belongs to the DapB family.

It localises to the cytoplasm. It catalyses the reaction (S)-2,3,4,5-tetrahydrodipicolinate + NAD(+) + H2O = (2S,4S)-4-hydroxy-2,3,4,5-tetrahydrodipicolinate + NADH + H(+). The enzyme catalyses (S)-2,3,4,5-tetrahydrodipicolinate + NADP(+) + H2O = (2S,4S)-4-hydroxy-2,3,4,5-tetrahydrodipicolinate + NADPH + H(+). Its pathway is amino-acid biosynthesis; L-lysine biosynthesis via DAP pathway; (S)-tetrahydrodipicolinate from L-aspartate: step 4/4. Its function is as follows. Catalyzes the conversion of 4-hydroxy-tetrahydrodipicolinate (HTPA) to tetrahydrodipicolinate. The protein is 4-hydroxy-tetrahydrodipicolinate reductase of Aquifex aeolicus (strain VF5).